The primary structure comprises 307 residues: Transmembrane and coiled-coil domain-containing protein 5B (307 aa).

A coiled-coil region spans residues 20-212 (TLEAIKQNLK…SKAQNDSSQV (193 aa)). Residues 246–268 (YLFFMVMIVIRLLGYVFFHLQYV) traverse the membrane as a helical segment.

It belongs to the TMCO5 family.

It is found in the membrane. This is Transmembrane and coiled-coil domain-containing protein 5B (Tmco5b) from Mus musculus (Mouse).